The primary structure comprises 342 residues: MKNITIAIDAMGGDHGLEIVIPACIRAIKNNPDLKLLLVGVQDKISASLKKHGMLSCQQFTIVHASEVVTMDELPSHALRNKKDSSMRIAINLVKEGRAQACVSAGNTGALMATARYVLKTLPGIDRPAIVSELPTMGGKTRVIDLGANVDSCAEHLFQFAVMGSALIQAIENKPKPKIGLLNIGVEEIKGNDQVKRTAHMLAECSVMNYVGYVEGDHFYSGDVDLVVCDGFVGNVALKASEGLAKLLLTVLKESFSRNWLTKIAGLIALPALKHLKNRLDPSRYNGASLLGLNGIVVKSHGGANEVGFQHAIEQAVLEVKNNVVDLVRDQINDFINQGLLL.

It belongs to the PlsX family. In terms of assembly, homodimer. Probably interacts with PlsY.

It localises to the cytoplasm. It carries out the reaction a fatty acyl-[ACP] + phosphate = an acyl phosphate + holo-[ACP]. It functions in the pathway lipid metabolism; phospholipid metabolism. In terms of biological role, catalyzes the reversible formation of acyl-phosphate (acyl-PO(4)) from acyl-[acyl-carrier-protein] (acyl-ACP). This enzyme utilizes acyl-ACP as fatty acyl donor, but not acyl-CoA. The polypeptide is Phosphate acyltransferase (Legionella pneumophila (strain Paris)).